The following is a 486-amino-acid chain: Maintenance of mitochondrial morphology protein 1 (486 aa).

The Lumenal segment spans residues Met-1–Gly-23. Residues Phe-24–Phe-44 form a helical membrane-spanning segment. At Gly-45–Gln-486 the chain is on the cytoplasmic side. The interval Ser-52–Ser-103 is disordered. The span at Ser-67–Ser-84 shows a compositional bias: low complexity. Positions Pro-92–Ser-103 are enriched in polar residues. Positions Gln-140–Pro-389 constitute an SMP-LTD domain. The span at Ala-413–Ala-426 shows a compositional bias: low complexity. Residues Ala-413–Gln-486 are disordered.

It belongs to the MMM1 family. Homodimer. Component of the ER-mitochondria encounter structure (ERMES) or MDM complex, composed of mmm1, mdm10, mdm12 and mdm34. A mmm1 homodimer associates with one molecule of mdm12 on each side in a pairwise head-to-tail manner, and the SMP-LTD domains of mmm1 and mdm12 generate a continuous hydrophobic tunnel for phospholipid trafficking.

It localises to the endoplasmic reticulum membrane. In terms of biological role, component of the ERMES/MDM complex, which serves as a molecular tether to connect the endoplasmic reticulum (ER) and mitochondria. Components of this complex are involved in the control of mitochondrial shape and protein biogenesis, and function in nonvesicular lipid trafficking between the ER and mitochondria. The mdm12-mmm1 subcomplex functions in the major beta-barrel assembly pathway that is responsible for biogenesis of all outer membrane beta-barrel proteins, and acts in a late step after the SAM complex. The mdm10-mdm12-mmm1 subcomplex further acts in the TOM40-specific pathway after the action of the mdm12-mmm1 complex. Essential for establishing and maintaining the structure of mitochondria and maintenance of mtDNA nucleoids. In Talaromyces marneffei (strain ATCC 18224 / CBS 334.59 / QM 7333) (Penicillium marneffei), this protein is Maintenance of mitochondrial morphology protein 1.